Here is a 259-residue protein sequence, read N- to C-terminus: Probable kinetochore protein spc25 (259 aa).

Over residues 1–20 (MSRKSVMSSTFEPSLSTSRQ) the composition is skewed to polar residues. The tract at residues 1-25 (MSRKSVMSSTFEPSLSTSRQPLGPS) is disordered. Residues 59–162 (RKRVLEERNQ…HAAQLEAQAR (104 aa)) are a coiled coil.

This sequence belongs to the SPC25 family. Component of the NDC80 complex, which consists of kpr-1/ndc80, kpr-2/nuf2, kpr-3/spc24 and kpr-4/spc25.

The protein localises to the nucleus. Its subcellular location is the chromosome. It is found in the centromere. The protein resides in the kinetochore. In terms of biological role, acts as a component of the essential kinetochore-associated NDC80 complex, which is required for chromosome segregation and spindle checkpoint activity. The protein is Probable kinetochore protein spc25 (kpr-4) of Neurospora crassa (strain ATCC 24698 / 74-OR23-1A / CBS 708.71 / DSM 1257 / FGSC 987).